An 892-amino-acid polypeptide reads, in one-letter code: Transposase for transposon Tn4556 (892 aa).

The span at 1–12 shows a compositional bias: basic and acidic residues; sequence MGGRAGLDDGRG. The disordered stretch occupies residues 1 to 63; it reads MGGRAGLDDG…GQPARDAEHR (63 aa). Residues 23–34 show a composition bias toward low complexity; sequence VAEGAAGAAAWG.

This sequence belongs to the transposase 7 family.

Its function is as follows. Required for transposition of transposon Tn4556. The polypeptide is Transposase for transposon Tn4556 (tnpA) (Streptomyces fradiae (Streptomyces roseoflavus)).